Reading from the N-terminus, the 721-residue chain is MAAPVVAPPGVVVSRANKRSGAGPGGSGGGGARGAEEEPPPPLQAVLVADSFDRRFFPISKDQPRVLLPLANVALIDYTLEFLTATGVQETFVFCCWKAAQIKEHLLKSKWCRPTSLNVVRIITSELYRSLGDVLRDVDAKALVRSDFLLVYGDVISNINITRALEEHRLRRKLEKNVSVMTMIFKESSPSHPTRCHEDNVVVAVDSTTNRVLHFQKTQGLRRFAFPLSLFQGSSDGVEVRYDLLDCHISICSPQVAQLFTDNFDYQTRDDFVRGLLVNEEILGNQIHMHVTAKEYGARVSNLHMYSAVCADVIRRWVYPLTPEANFTDSTTQSCTHSRHNIYRGPEVSLGHGSILEENVLLGSGTVIGSNCFITNSVIGPGCHIGDNVVLDQTYLWQGVRVAAGAQIHQSLLCDNAEVKERVTLKPRSVLTSQVVVGPNITLPEGSVISLHPPDAEEDEDDGEFSDDSGADQEKDKVKMKGYNPAEVGAAGKGYLWKAAGMNMEEEEELQQNLWGLKINMEEESESESEQSMDSEEPDSRGGSPQMDDIKVFQNEVLGTLQRGKEENISCDNLVLEINSLKYAYNISLKEVMQVLSHVVLEFPLQQMDSPLDSSRYCALLLPLLKAWSPVFRNYIKRAADHLEALAAIEDFFLEHEALGISMAKVLMAFYQLEILAEETILSWFSQRDTTDKGQQLRKNQQLQRFIQWLKEAEEESSEDD.

The segment covering 1–13 (MAAPVVAPPGVVV) has biased composition (low complexity). The tract at residues 1 to 40 (MAAPVVAPPGVVVSRANKRSGAGPGGSGGGGARGAEEEPP) is disordered. A2 carries the N-acetylalanine modification. R19 carries the post-translational modification Omega-N-methylarginine. The segment covering 22–33 (AGPGGSGGGGAR) has biased composition (gly residues). Phosphoserine is present on S27. Residues K61 and K103 each participate in a glycyl lysine isopeptide (Lys-Gly) (interchain with G-Cter in ubiquitin) cross-link. S130 carries the post-translational modification Phosphoserine. Glycyl lysine isopeptide (Lys-Gly) (interchain with G-Cter in ubiquitin) cross-links involve residues K141 and K217. At T322 the chain carries Phosphothreonine. 2 disordered regions span residues 444–483 (PEGS…MKGY) and 523–547 (EESE…SPQM). Phosphoserine occurs at positions 450, 466, 469, 532, and 540. 2 stretches are compositionally biased toward acidic residues: residues 456–471 (AEED…DSGA) and 523–537 (EESE…DSEE). The W2 domain maps to 543–720 (GSPQMDDIKV…KEAEEESSED (178 aa)). S544 is modified (phosphoserine; by DYRK2). Phosphoserine is present on S717.

The protein belongs to the eIF-2B gamma/epsilon subunits family. As to quaternary structure, component of the translation initiation factor 2B (eIF2B) complex which is a heterodecamer of two sets of five different subunits: alpha, beta, gamma, delta and epsilon. Subunits alpha, beta and delta comprise a regulatory subcomplex and subunits epsilon and gamma comprise a catalytic subcomplex. Within the complex, the hexameric regulatory complex resides at the center, with the two heterodimeric catalytic subcomplexes bound on opposite sides. Phosphorylated at Ser-544 by DYRK2; this is required for subsequent phosphorylation by GSK3B. Phosphorylated on serine and threonine residues by GSK3B; phosphorylation inhibits its function. Post-translationally, polyubiquitinated, probably by NEDD4.

It localises to the cytoplasm. Its subcellular location is the cytosol. Its activity is regulated as follows. Activated by the chemical integrated stress response (ISR) inhibitor ISRIB which stimulates guanine nucleotide exchange factor activity for both phosphorylated and unphosphorylated eIF2. Acts as a component of the translation initiation factor 2B (eIF2B) complex, which catalyzes the exchange of GDP for GTP on eukaryotic initiation factor 2 (eIF2) gamma subunit. Its guanine nucleotide exchange factor activity is repressed when bound to eIF2 complex phosphorylated on the alpha subunit, thereby limiting the amount of methionyl-initiator methionine tRNA available to the ribosome and consequently global translation is repressed. The protein is Translation initiation factor eIF2B subunit epsilon (EIF2B5) of Homo sapiens (Human).